The chain runs to 371 residues: Histidinol-phosphate aminotransferase (371 aa).

Position 222 is an N6-(pyridoxal phosphate)lysine (lysine 222).

Belongs to the class-II pyridoxal-phosphate-dependent aminotransferase family. Histidinol-phosphate aminotransferase subfamily. Homodimer. It depends on pyridoxal 5'-phosphate as a cofactor.

It catalyses the reaction L-histidinol phosphate + 2-oxoglutarate = 3-(imidazol-4-yl)-2-oxopropyl phosphate + L-glutamate. Its pathway is amino-acid biosynthesis; L-histidine biosynthesis; L-histidine from 5-phospho-alpha-D-ribose 1-diphosphate: step 7/9. This is Histidinol-phosphate aminotransferase from Anoxybacillus flavithermus (strain DSM 21510 / WK1).